The primary structure comprises 554 residues: Urocanate hydratase (554 aa).

NAD(+)-binding positions include 49-50, Gln127, 173-175, Glu193, Arg198, 239-240, 260-264, 270-271, and Tyr319; these read GG, GMG, NA, QTSAH, and YI. Residue Cys407 is part of the active site. Gly489 provides a ligand contact to NAD(+).

This sequence belongs to the urocanase family. The cofactor is NAD(+).

It localises to the cytoplasm. It carries out the reaction 4-imidazolone-5-propanoate = trans-urocanate + H2O. Its pathway is amino-acid degradation; L-histidine degradation into L-glutamate; N-formimidoyl-L-glutamate from L-histidine: step 2/3. In terms of biological role, catalyzes the conversion of urocanate to 4-imidazolone-5-propionate. This chain is Urocanate hydratase, found in Bacillus velezensis (strain DSM 23117 / BGSC 10A6 / LMG 26770 / FZB42) (Bacillus amyloliquefaciens subsp. plantarum).